The following is a 567-amino-acid chain: ETHYLENE INSENSITIVE 3-like 3 protein (567 aa).

Residues 24-44 (NVAEIDVSDEEIDADDLERRM) are a coiled coil. 2 disordered regions span residues 55–81 (KERQ…AQRK) and 286–393 (IQQP…RNIL). Residues 69 to 79 (ETPKKISDQAQ) are compositionally biased toward basic and acidic residues. A DNA-binding region spans residues 162 to 288 (SQFVLQDLQD…LNQEESLIQQ (127 aa)). A compositionally biased stretch (polar residues) spans 286–299 (IQQPSSDNGNSNVT). Residues 300 to 312 (ETHRRGNNADRRK) are compositionally biased toward basic and acidic residues. A compositionally biased stretch (basic residues) spans 363 to 372 (KHRRRKRPRI).

The protein belongs to the EIN3 family. In terms of assembly, interacts with MYB72.

Its subcellular location is the nucleus. Functionally, probable transcription factor that may be involved in the ethylene response pathway. The sequence is that of ETHYLENE INSENSITIVE 3-like 3 protein (EIL3) from Arabidopsis thaliana (Mouse-ear cress).